Reading from the N-terminus, the 178-residue chain is Probable chorismate pyruvate-lyase (178 aa).

3 residues coordinate substrate: Arg73, Leu111, and Glu163.

Belongs to the UbiC family.

It is found in the cytoplasm. The catalysed reaction is chorismate = 4-hydroxybenzoate + pyruvate. Its pathway is cofactor biosynthesis; ubiquinone biosynthesis. In terms of biological role, removes the pyruvyl group from chorismate, with concomitant aromatization of the ring, to provide 4-hydroxybenzoate (4HB) for the ubiquinone pathway. The protein is Probable chorismate pyruvate-lyase of Pseudomonas aeruginosa (strain UCBPP-PA14).